The sequence spans 923 residues: Hexokinase-3 (923 aa).

The segment covering 1-18 (MDSIGSSGLRQGEETLSC) has biased composition (polar residues). The tract at residues 1 to 30 (MDSIGSSGLRQGEETLSCSEEGLPGPSDSS) is disordered. Hexokinase domains are found at residues 27–471 (SDSS…MVTA) and 477–912 (AAHR…LVTA). A hexokinase small subdomain 1 region spans residues 84–220 (HGTEQGDFVV…AYNIDVVAVV (137 aa)). 95–102 (ELGATGAS) serves as a coordination point for ATP. 95–104 (ELGATGASLR) serves as a coordination point for D-glucose 6-phosphate. D-glucose-binding positions include serine 168, 185-186 (TK), and 221-222 (ND). The interval 221–460 (NDTVGTMMGC…CDVSLIPSVD (240 aa)) is hexokinase large subdomain 1. Residues aspartate 222 and threonine 245 each contribute to the D-glucose 6-phosphate site. D-glucose contacts are provided by residues asparagine 248, glutamate 273, and 304–307 (QRFE). Residue 426-428 (GGR) participates in D-glucose 6-phosphate binding. ATP is bound by residues 438-439 (SV) and 542-547 (DLGGTN). Positions 531-661 (DGSERGDFLA…AVELNVVAIV (131 aa)) are hexokinase small subdomain 2. Position 542 to 546 (542 to 546 (DLGGT)) interacts with D-glucose 6-phosphate. D-glucose-binding positions include 609–610 (SF), 626–627 (TK), and 662–663 (ND). The segment at 662 to 901 (NDTVGTMMSC…CVVTFLQSED (240 aa)) is hexokinase large subdomain 2. D-glucose 6-phosphate contacts are provided by aspartate 663 and threonine 686. Threonine 686 contributes to the ATP binding site. Residues 688–689 (TN), glutamate 714, and glutamate 748 contribute to the D-glucose site. Residues 753-754 (GM), 790-794 (TKFLS), and 869-873 (TLYKL) contribute to the ATP site. D-glucose 6-phosphate is bound by residues 867-869 (DGT) and serine 903.

Belongs to the hexokinase family.

It carries out the reaction a D-hexose + ATP = a D-hexose 6-phosphate + ADP + H(+). The catalysed reaction is D-fructose + ATP = D-fructose 6-phosphate + ADP + H(+). It catalyses the reaction D-glucose + ATP = D-glucose 6-phosphate + ADP + H(+). The protein operates within carbohydrate metabolism; hexose metabolism. It functions in the pathway carbohydrate degradation; glycolysis; D-glyceraldehyde 3-phosphate and glycerone phosphate from D-glucose: step 1/4. With respect to regulation, hexokinase is an allosteric enzyme inhibited by its product D-glucose 6-phosphate. Catalyzes the phosphorylation of hexose, such as D-glucose and D-fructose, to hexose 6-phosphate (D-glucose 6-phosphate and D-fructose 6-phosphate, respectively). Mediates the initial step of glycolysis by catalyzing phosphorylation of D-glucose to D-glucose 6-phosphate. The chain is Hexokinase-3 from Homo sapiens (Human).